Consider the following 394-residue polypeptide: Elongation factor Tu (394 aa).

The 195-residue stretch at 10-204 folds into the tr-type G domain; sequence KPHINVGTIG…HLDNYIPEPK (195 aa). The interval 19–26 is G1; sequence GHVDHGKT. 19–26 serves as a coordination point for GTP; it reads GHVDHGKT. Residue T26 coordinates Mg(2+). The G2 stretch occupies residues 60–64; the sequence is GITIN. A G3 region spans residues 81-84; that stretch reads DCPG. Residues 81-85 and 136-139 contribute to the GTP site; these read DCPGH and NKCD. The tract at residues 136–139 is G4; it reads NKCD. The G5 stretch occupies residues 174 to 176; that stretch reads SAL.

The protein belongs to the TRAFAC class translation factor GTPase superfamily. Classic translation factor GTPase family. EF-Tu/EF-1A subfamily. In terms of assembly, monomer.

The protein localises to the cytoplasm. It catalyses the reaction GTP + H2O = GDP + phosphate + H(+). In terms of biological role, GTP hydrolase that promotes the GTP-dependent binding of aminoacyl-tRNA to the A-site of ribosomes during protein biosynthesis. This Wigglesworthia glossinidia brevipalpis protein is Elongation factor Tu.